The primary structure comprises 102 residues: Large ribosomal subunit protein uL24 (102 aa).

The segment at 44 to 65 (HAKPSQDNPQGGILNQEAPIHS) is disordered.

The protein belongs to the universal ribosomal protein uL24 family. As to quaternary structure, part of the 50S ribosomal subunit.

In terms of biological role, one of two assembly initiator proteins, it binds directly to the 5'-end of the 23S rRNA, where it nucleates assembly of the 50S subunit. Functionally, one of the proteins that surrounds the polypeptide exit tunnel on the outside of the subunit. The polypeptide is Large ribosomal subunit protein uL24 (Shouchella clausii (strain KSM-K16) (Alkalihalobacillus clausii)).